The following is a 409-amino-acid chain: Serine/threonine transporter SstT (409 aa).

9 consecutive transmembrane segments (helical) span residues 24–44 (LALG…AGLF), 48–68 (FVGA…AATI), 82–102 (IIVL…IAGM), 142–162 (AIAN…GAAL), 194–214 (LGIF…ALAG), 218–238 (LLAV…PAIV), 292–312 (IPLG…VLAM), 319–339 (GIQV…VSAC), and 365–385 (VAMQ…SAET).

It belongs to the dicarboxylate/amino acid:cation symporter (DAACS) (TC 2.A.23) family.

The protein resides in the cell inner membrane. The catalysed reaction is L-serine(in) + Na(+)(in) = L-serine(out) + Na(+)(out). The enzyme catalyses L-threonine(in) + Na(+)(in) = L-threonine(out) + Na(+)(out). Its function is as follows. Involved in the import of serine and threonine into the cell, with the concomitant import of sodium (symport system). The sequence is that of Serine/threonine transporter SstT from Neisseria meningitidis serogroup C / serotype 2a (strain ATCC 700532 / DSM 15464 / FAM18).